The primary structure comprises 382 residues: Methylthioribose-1-phosphate isomerase (382 aa).

Asp-257 functions as the Proton donor in the catalytic mechanism.

Belongs to the eIF-2B alpha/beta/delta subunits family. MtnA subfamily.

The protein resides in the cytoplasm. It localises to the nucleus. It catalyses the reaction 5-(methylsulfanyl)-alpha-D-ribose 1-phosphate = 5-(methylsulfanyl)-D-ribulose 1-phosphate. It functions in the pathway amino-acid biosynthesis; L-methionine biosynthesis via salvage pathway; L-methionine from S-methyl-5-thio-alpha-D-ribose 1-phosphate: step 1/6. Catalyzes the interconversion of methylthioribose-1-phosphate (MTR-1-P) into methylthioribulose-1-phosphate (MTRu-1-P). The polypeptide is Methylthioribose-1-phosphate isomerase (Paracoccidioides brasiliensis (strain Pb18)).